Here is a 188-residue protein sequence, read N- to C-terminus: Elongation factor P (188 aa).

Belongs to the elongation factor P family.

Its subcellular location is the cytoplasm. It functions in the pathway protein biosynthesis; polypeptide chain elongation. Its function is as follows. Involved in peptide bond synthesis. Stimulates efficient translation and peptide-bond synthesis on native or reconstituted 70S ribosomes in vitro. Probably functions indirectly by altering the affinity of the ribosome for aminoacyl-tRNA, thus increasing their reactivity as acceptors for peptidyl transferase. The protein is Elongation factor P of Bacteroides thetaiotaomicron (strain ATCC 29148 / DSM 2079 / JCM 5827 / CCUG 10774 / NCTC 10582 / VPI-5482 / E50).